Consider the following 353-residue polypeptide: Outer membrane protein P2 (353 aa).

The signal sequence occupies residues 1–20 (MKKTLAALIVGAFAASAANA).

The protein belongs to the Gram-negative porin family. Homotrimer.

The protein localises to the cell outer membrane. Forms pores that allow passive diffusion of small molecules across the outer membrane. In Haemophilus influenzae, this protein is Outer membrane protein P2 (ompP2).